The chain runs to 600 residues: Calcium/calmodulin-dependent serine/threonine-protein kinase 1 (600 aa).

The interval 1–99 (MGLCHGKSAA…GGFKRPFPPP (99 aa)) is disordered. Positions 24 to 56 (TRVAEAAAAPAKPASPAPSAAAAAAAPAKPGTP) are enriched in low complexity. Over residues 74–85 (YKGSPANSSVAS) the composition is skewed to polar residues. Positions 147–409 (YELGREVGRG…AAQALCHPWI (263 aa)) constitute a Protein kinase domain. ATP contacts are provided by residues 153–161 (VGRGHFGYT) and K179. The active-site Proton acceptor is D275.

The protein belongs to the protein kinase superfamily. Ser/Thr protein kinase family. Autophosphorylated. As to expression, highly expressed in roots in the zone of cell division. Expressed in leaf mesophyll cells and at lower levels in mature stems.

It catalyses the reaction L-seryl-[protein] + ATP = O-phospho-L-seryl-[protein] + ADP + H(+). The catalysed reaction is L-threonyl-[protein] + ATP = O-phospho-L-threonyl-[protein] + ADP + H(+). Its activity is regulated as follows. Activated by the binding of calmodulin-like protein 1 (CML1) in the presence of Ca(2+). Functionally, possesses kinase activity in vitro. The polypeptide is Calcium/calmodulin-dependent serine/threonine-protein kinase 1 (CAMK1) (Oryza sativa subsp. japonica (Rice)).